The primary structure comprises 229 residues: Enolase-phosphatase E1 (229 aa).

The protein belongs to the HAD-like hydrolase superfamily. MasA/MtnC family. Monomer. The cofactor is Mg(2+).

It catalyses the reaction 5-methylsulfanyl-2,3-dioxopentyl phosphate + H2O = 1,2-dihydroxy-5-(methylsulfanyl)pent-1-en-3-one + phosphate. It functions in the pathway amino-acid biosynthesis; L-methionine biosynthesis via salvage pathway; L-methionine from S-methyl-5-thio-alpha-D-ribose 1-phosphate: step 3/6. Its pathway is amino-acid biosynthesis; L-methionine biosynthesis via salvage pathway; L-methionine from S-methyl-5-thio-alpha-D-ribose 1-phosphate: step 4/6. Functionally, bifunctional enzyme that catalyzes the enolization of 2,3-diketo-5-methylthiopentyl-1-phosphate (DK-MTP-1-P) into the intermediate 2-hydroxy-3-keto-5-methylthiopentenyl-1-phosphate (HK-MTPenyl-1-P), which is then dephosphorylated to form the acireductone 1,2-dihydroxy-3-keto-5-methylthiopentene (DHK-MTPene). The polypeptide is Enolase-phosphatase E1 (Yersinia pestis (strain Pestoides F)).